The primary structure comprises 364 residues: Mannose-1-phosphate guanyltransferase (364 aa).

Belongs to the transferase hexapeptide repeat family.

It localises to the cytoplasm. The enzyme catalyses alpha-D-mannose 1-phosphate + GTP + H(+) = GDP-alpha-D-mannose + diphosphate. It participates in nucleotide-sugar biosynthesis; GDP-alpha-D-mannose biosynthesis; GDP-alpha-D-mannose from alpha-D-mannose 1-phosphate (GTP route): step 1/1. In terms of biological role, involved in cell wall synthesis where it is required for glycosylation. Involved in cell cycle progression through cell-size checkpoint. The protein is Mannose-1-phosphate guanyltransferase (MPG1) of Gibberella zeae (strain ATCC MYA-4620 / CBS 123657 / FGSC 9075 / NRRL 31084 / PH-1) (Wheat head blight fungus).